The sequence spans 384 residues: Succinyl-diaminopimelate desuccinylase (384 aa).

H73 contacts Zn(2+). D75 is a catalytic residue. D106 lines the Zn(2+) pocket. The active-site Proton acceptor is E140. 3 residues coordinate Zn(2+): E141, E169, and H358.

It belongs to the peptidase M20A family. DapE subfamily. In terms of assembly, homodimer. Zn(2+) is required as a cofactor. Requires Co(2+) as cofactor.

The enzyme catalyses N-succinyl-(2S,6S)-2,6-diaminopimelate + H2O = (2S,6S)-2,6-diaminopimelate + succinate. Its pathway is amino-acid biosynthesis; L-lysine biosynthesis via DAP pathway; LL-2,6-diaminopimelate from (S)-tetrahydrodipicolinate (succinylase route): step 3/3. Its function is as follows. Catalyzes the hydrolysis of N-succinyl-L,L-diaminopimelic acid (SDAP), forming succinate and LL-2,6-diaminopimelate (DAP), an intermediate involved in the bacterial biosynthesis of lysine and meso-diaminopimelic acid, an essential component of bacterial cell walls. The chain is Succinyl-diaminopimelate desuccinylase from Pelagibacter ubique (strain HTCC1062).